The chain runs to 580 residues: Laccase-6 (580 aa).

Positions 1 to 22 (MSCSWMIPVFAILAFVASAAQA) are cleaved as a signal peptide. Plastocyanin-like domains lie at 30 to 148 (NVAT…PRRA) and 158 to 317 (EEKT…YVDA). N-linked (GlcNAc...) asparagine glycosylation is found at N44 and N78. Cu cation is bound by residues H82, H84, H127, and H129. N-linked (GlcNAc...) asparagine glycosylation is found at N306, N335, N385, N397, and N462. In terms of domain architecture, Plastocyanin-like 3 spans 424-564 (DFPDQPPVAF…AMVFEVESGP (141 aa)). Cu cation contacts are provided by H480, H483, H485, H543, C544, H545, and H549.

The protein belongs to the multicopper oxidase family. The cofactor is Cu cation.

It is found in the secreted. Its subcellular location is the extracellular space. The protein resides in the apoplast. It carries out the reaction 4 hydroquinone + O2 = 4 benzosemiquinone + 2 H2O. Functionally, lignin degradation and detoxification of lignin-derived products. The chain is Laccase-6 (LAC6) from Oryza sativa subsp. japonica (Rice).